The chain runs to 400 residues: MTTFQPGRLAGQLAATALLAATCSAFAADAPTTVPSSLGAIGTTPTLDNITMEPGLPSDAKRVYVLDPGHFHVTTTVYTIDGNKNNLLGMTDTGKLANVMLSSDGKFFVTSNTTYSRIARGKRDDYVEVIDAQSHKVLADIDIPEGRFLTGVMNRMASLSTDNKYMLFQQFAPSPAVGLVDLEKKSFVKMMDIPDCYQIFPVPNQSFYMHCRDGSLQQFGYDDKGNLKPMKPTKVFHGEDDYLFVNPYYSNGSGRLVWPTYEGRIFQAKLTDKKVDFMKPFELFTEAEKKANWRPGGWQVVAYHKARNEIYVLADQRAKWTHVTASRYVFVVDGTTGKRLRRIDLGHEIDGISVTQDANPNLYAVSAEAKTLFTFNAVTGKETGKVDELGRAPTISLTMD.

The signal sequence occupies residues 1-27 (MTTFQPGRLAGQLAATALLAATCSAFA).

It belongs to the aromatic amine dehydrogenase heavy chain family. As to quaternary structure, tetramer of two light and two heavy chains.

The protein resides in the periplasm. The catalysed reaction is 2 oxidized [amicyanin] + methylamine + H2O = 2 reduced [amicyanin] + formaldehyde + NH4(+) + 2 H(+). In terms of biological role, methylamine dehydrogenase carries out the oxidation of methylamine. Electrons are passed from methylamine dehydrogenase to amicyanin. In Methylobacillus flagellatus (strain ATCC 51484 / DSM 6875 / VKM B-1610 / KT), this protein is Methylamine dehydrogenase heavy chain (mauB).